The primary structure comprises 406 residues: Proteasome-activating nucleotidase 1 (406 aa).

A compositionally biased stretch (acidic residues) spans 1-12 (MTDTVEDVELPY). Residues 1–20 (MTDTVEDVELPYDDSASQQD) are disordered. Positions 12–70 (YDDSASQQDKLEALEEQLSTLEEENEEMRDRLLDANAENNKYQQKLERLSHENKKLKQS) form a coiled coil. ATP contacts are provided by residues 192-197 (GTGKTL) and histidine 331. Residues 385–406 (AREKLDQDSEPAAATDVSRTFA) form a disordered region. The docks into pockets in the proteasome alpha-ring to cause gate opening stretch occupies residues 404-406 (TFA).

This sequence belongs to the AAA ATPase family. In terms of assembly, homohexamer. The hexameric complex has a two-ring architecture resembling a top hat that caps the 20S proteasome core at one or both ends. Upon ATP-binding, the C-terminus of PAN interacts with the alpha-rings of the proteasome core by binding to the intersubunit pockets.

It localises to the cytoplasm. Functionally, ATPase which is responsible for recognizing, binding, unfolding and translocation of substrate proteins into the archaeal 20S proteasome core particle. Is essential for opening the gate of the 20S proteasome via an interaction with its C-terminus, thereby allowing substrate entry and access to the site of proteolysis. Thus, the C-termini of the proteasomal ATPase function like a 'key in a lock' to induce gate opening and therefore regulate proteolysis. Unfolding activity requires energy from ATP hydrolysis, whereas ATP binding alone promotes ATPase-20S proteasome association which triggers gate opening, and supports translocation of unfolded substrates. The polypeptide is Proteasome-activating nucleotidase 1 (Halobacterium salinarum (strain ATCC 700922 / JCM 11081 / NRC-1) (Halobacterium halobium)).